Consider the following 254-residue polypeptide: Geranylgeranylglyceryl phosphate synthase (254 aa).

Positions 27 and 56 each coordinate Mg(2+). Sn-glycerol 1-phosphate contacts are provided by residues 174–180 (YLEAGSG), 212–213 (GG), and 234–235 (GT).

It belongs to the GGGP/HepGP synthase family. Group II subfamily. As to quaternary structure, homohexamer. The cofactor is Mg(2+).

It is found in the cytoplasm. The enzyme catalyses sn-glycerol 1-phosphate + (2E,6E,10E)-geranylgeranyl diphosphate = sn-3-O-(geranylgeranyl)glycerol 1-phosphate + diphosphate. Its pathway is membrane lipid metabolism; glycerophospholipid metabolism. Prenyltransferase that catalyzes the transfer of the geranylgeranyl moiety of geranylgeranyl diphosphate (GGPP) to the C3 hydroxyl of sn-glycerol-1-phosphate (G1P). This reaction is the first ether-bond-formation step in the biosynthesis of archaeal membrane lipids. In Aeropyrum pernix (strain ATCC 700893 / DSM 11879 / JCM 9820 / NBRC 100138 / K1), this protein is Geranylgeranylglyceryl phosphate synthase.